Here is a 470-residue protein sequence, read N- to C-terminus: 3-isopropylmalate dehydratase large subunit (470 aa).

Positions 349, 409, and 412 each coordinate [4Fe-4S] cluster.

It belongs to the aconitase/IPM isomerase family. LeuC type 1 subfamily. Heterodimer of LeuC and LeuD. [4Fe-4S] cluster serves as cofactor.

It catalyses the reaction (2R,3S)-3-isopropylmalate = (2S)-2-isopropylmalate. Its pathway is amino-acid biosynthesis; L-leucine biosynthesis; L-leucine from 3-methyl-2-oxobutanoate: step 2/4. Functionally, catalyzes the isomerization between 2-isopropylmalate and 3-isopropylmalate, via the formation of 2-isopropylmaleate. In Campylobacter jejuni subsp. jejuni serotype O:2 (strain ATCC 700819 / NCTC 11168), this protein is 3-isopropylmalate dehydratase large subunit.